A 205-amino-acid chain; its full sequence is High frequency lysogenization protein HflD homolog (205 aa).

Belongs to the HflD family.

It is found in the cytoplasm. The protein resides in the cell inner membrane. This is High frequency lysogenization protein HflD homolog from Shewanella sp. (strain ANA-3).